Here is a 1936-residue protein sequence, read N- to C-terminus: Probable inactive serine/threonine-protein kinase DDB_G0278909 (1936 aa).

LRR repeat units lie at residues 61–82, 83–103, 104–125, 126–147, and 151–173; these read LLEKLNLSSNSLIEVTSLGHLN, KLKRLILNRNNLIEYSVQGLS, SLVYLGLCNNRIDRITDMSDCK, KLINIDLSGNRLTCGDGFDHFS, and SLKVLDLSSNSINCSLIDFQKKI. One can recognise an LRRCT domain in the interval 191–230; that stretch reads NLIEKKYEEFRLFVINELPKLKYLNWVLISKDERTKASKL. Composition is skewed to low complexity over residues 253–285 and 293–302; these read NNPNNTVTSAQSSPSLSSVSTPIPTPLNTSSNN and TTTSVSVGSS. 2 disordered regions span residues 253–319 and 347–386; these read NNPN…STSF and KERENHQSTSPSSSSLSISSSSQNNNSNHHHHHPKSIDET. A compositionally biased stretch (polar residues) spans 310–319; it reads SSPNSRSTSF. HEAT repeat units lie at residues 325 to 368 and 439 to 476; these read SVGA…SSSS and QETEDYIDILLNELQPNNTDFPTFASVIDQKVYLDLLY. Residues 353–373 are compositionally biased toward low complexity; the sequence is QSTSPSSSSLSISSSSQNNNS. Residues 516–526 show a composition bias toward low complexity; sequence LSSSSSSSSTT. Disordered regions lie at residues 516–544, 599–620, 660–689, 702–756, and 769–809; these read LSSSSSSSSTTPPQPQLPPPPPQQQQLDL, NSTLSTTPPLSSTTPPSPSPKL, IDQNTATTPSTPSKNLPKRLPSQSNLINNN, QSIL…PIMK, and QDQP…HFKS. The segment covering 527–538 has biased composition (pro residues); it reads PPQPQLPPPPPQ. 2 HEAT repeats span residues 574 to 614 and 617 to 654; these read PVVS…TTPP and SPKLPTLEETIESVVTAKPSSTTTTATQTNKVSGGSAK. Over residues 600–612 the composition is skewed to low complexity; the sequence is STLSTTPPLSSTT. Residues 660 to 673 show a composition bias toward polar residues; it reads IDQNTATTPSTPSK. The segment covering 736–756 has biased composition (low complexity); that stretch reads STTTNTTPTSTPGSPSKPIMK. A compositionally biased stretch (pro residues) spans 774–785; that stretch reads IVSPPQPQPQPP. Over residues 786 to 805 the composition is skewed to low complexity; the sequence is IVQQKQQQQQQQQQQQQPQQ. A Protein kinase domain is found at 961 to 1241; that stretch reads IQVGSRLGLG…ISKILSQPFQ (281 aa). ATP is bound by residues 967–975 and Lys-988; that span reads LGLGSFGDC. Disordered regions lie at residues 1050 to 1075 and 1261 to 1308; these read SHNNNNNNNNNNNNNNNNNNNNNNNN and NTTI…VKHQ. Low complexity-rich tracts occupy residues 1052–1075, 1266–1282, and 1291–1302; these read NNNNNNNNNNNNNNNNNNNNNNNN, SSSSSSGSGSSSVVGSV, and NNSNTGSTGSTS. HEAT repeat units follow at residues 1317–1356, 1512–1549, 1553–1590, 1598–1635, 1690–1728, 1739–1775, 1780–1817, 1821–1858, and 1863–1900; these read RKMILVLERIVSMLSTAAASASTSTISTDSIDSIKRALKA, FIEEGGVSSLLKMLLNSGNSLSMRALLALCCLISNQNC, LHNAGIIPKLMELLSSPQKLLRLHSLKVIETMSKDIEF, NCLSLLVNLLLNSYNGTNTGIGNNTTGNNNDSQESICS, QSRLKLVPTINQLVEILSNSTLKESIIISILKCLTLFSS, SMSVSIVSTLLIRNENNYEIKIHSLRFVSSLAKVNNK, IHMMGILQTLVNNLYDKNSMIKDEAISTISWLVSSQEC, FLQKNVLPMLFDFLSTRNVDIMERLIWAISFFALDDSA, and RDNQQCIQFIVNCLDRHEEVFKTLSIKTILILSQKQIN.

The protein is Probable inactive serine/threonine-protein kinase DDB_G0278909 of Dictyostelium discoideum (Social amoeba).